Reading from the N-terminus, the 393-residue chain is Putative N(4)-(beta-N-acetylglucosaminyl)-L-asparaginase GH22932 (393 aa).

The interval 15-41 is disordered; the sequence is ALKPITNSSSDTITPNPNLITTSRGSS. Over residues 19 to 41 the composition is skewed to polar residues; sequence ITNSSSDTITPNPNLITTSRGSS. Intrachain disulfides connect cysteine 100–cysteine 105 and cysteine 199–cysteine 215. The Nucleophile role is filled by threonine 246. Substrate contacts are provided by residues 274-277 and 297-300; these read RVGD and TGDG. Cysteine 357 and cysteine 381 are joined by a disulfide.

The protein belongs to the Ntn-hydrolase family. In terms of assembly, heterotetramer of two alpha and two beta chains arranged as a dimer of alpha/beta heterodimers. Cleaved into an alpha and beta chain by autocatalysis; this activates the enzyme. The N-terminal residue of the beta subunit is responsible for the nucleophile hydrolase activity.

It carries out the reaction N(4)-(beta-N-acetyl-D-glucosaminyl)-L-asparagine + H2O = N-acetyl-beta-D-glucosaminylamine + L-aspartate + H(+). Cleaves the GlcNAc-Asn bond which joins oligosaccharides to the peptide of asparagine-linked glycoproteins. This chain is Putative N(4)-(beta-N-acetylglucosaminyl)-L-asparaginase GH22932, found in Drosophila grimshawi (Hawaiian fruit fly).